We begin with the raw amino-acid sequence, 154 residues long: Transcriptional repressor NrdR (154 aa).

Residues 3-34 (CPFCGANDTKVIDSRLVAEGEQVRRRRECVAC) fold into a zinc finger. The ATP-cone domain occupies 49-139 (PRLIKQDGTR…VYRRFQDLDE (91 aa)).

It belongs to the NrdR family. Zn(2+) is required as a cofactor.

Functionally, negatively regulates transcription of bacterial ribonucleotide reductase nrd genes and operons by binding to NrdR-boxes. This Pseudomonas putida (strain GB-1) protein is Transcriptional repressor NrdR.